A 295-amino-acid chain; its full sequence is MNSQLANAPNAFNYIESHRDEYQLSHDLTEILLQFPSTAAQFTARLNRSCMKIDHCVIEYRQQVPINATGSVIVEIHDKRMTDDESLQASWTFPLRCNIDLHYFSSSFFSLKDPIPWKLYYRVSDTNVHQRTHFAKFKGKLKLSTAKHSVDIPFRAPTVKIHSKQFSHRDVDFSHVDYGRWERKTLRSKSLSRIGLTGPGPIELQPGDSWASRSTIGFPNPHTESEVENALHPYRELNLLGTSALDPGDSASQAGLQRAQSTITMSVAQLSELVRTTVQECINNNCNPPQPKSLQ.

This sequence belongs to the begomovirus movement protein BC1 family. Binds to dimeric supercoiled plasmid DNA. Phosphorylated.

It localises to the host cell membrane. The protein localises to the host microsome membrane. Its subcellular location is the host endoplasmic reticulum membrane. In terms of biological role, transports viral genome to neighboring plant cells directly through plasmosdesmata, without any budding. The movement protein allows efficient cell to cell propagation, by bypassing the host cell wall barrier. Begomovirus genome is shuttled out of nucleus by Nuclear shuttle protein (NSP) and the movement protein transports the DNA-NSP complex to cell plasmodesmata and facilitates further movement across the cell wall. The sequence is that of Movement protein BC1 from Brassica oleracea (Wild cabbage).